Reading from the N-terminus, the 338-residue chain is D-erythrose-4-phosphate dehydrogenase (338 aa).

NAD(+) is bound at residue Arg12–Ile13. Residues Ser154–Thr156, Arg200, Thr213–Lys214, and Arg236 contribute to the substrate site. Residue Cys155 is the Nucleophile of the active site. Residue Asn318 participates in NAD(+) binding.

The protein belongs to the glyceraldehyde-3-phosphate dehydrogenase family. Epd subfamily. As to quaternary structure, homotetramer.

It localises to the cytoplasm. The catalysed reaction is D-erythrose 4-phosphate + NAD(+) + H2O = 4-phospho-D-erythronate + NADH + 2 H(+). It participates in cofactor biosynthesis; pyridoxine 5'-phosphate biosynthesis; pyridoxine 5'-phosphate from D-erythrose 4-phosphate: step 1/5. In terms of biological role, catalyzes the NAD-dependent conversion of D-erythrose 4-phosphate to 4-phosphoerythronate. This is D-erythrose-4-phosphate dehydrogenase from Tolumonas auensis (strain DSM 9187 / NBRC 110442 / TA 4).